Consider the following 210-residue polypeptide: Protein SgcE (210 aa).

Position 6 (serine 6) interacts with substrate. Positions 31, 33, and 64 each coordinate a divalent metal cation. Aspartate 33 serves as the catalytic Proton acceptor. Substrate-binding positions include histidine 64, 140–143 (DGQG), 169–171 (DGG), and 191–192 (GR). Aspartate 169 contributes to the a divalent metal cation binding site. Aspartate 169 acts as the Proton donor in catalysis.

Belongs to the ribulose-phosphate 3-epimerase family. Co(2+) is required as a cofactor. The cofactor is Fe(2+). It depends on Mn(2+) as a cofactor. Zn(2+) serves as cofactor.

Its pathway is carbohydrate degradation. In terms of biological role, probable pentose-5-phosphate 3-epimerase. The sequence is that of Protein SgcE (sgcE) from Escherichia coli (strain K12).